The primary structure comprises 534 residues: Calcium-dependent protein kinase 29 (534 aa).

Residues 1–72 form a disordered region; that stretch reads MGFCFSKFGK…STSSGSQIGP (72 aa). G2 is lipidated: N-myristoyl glycine. Low complexity predominate over residues 16-27; it reads IPISSSSDSSPP. Positions 49 to 63 are enriched in pro residues; it reads NPQPKPKPAPPPPPS. One can recognise a Protein kinase domain in the interval 85-343; it reads YDLHKELGRG…AAEALEHPWM (259 aa). Residues 91-99 and K114 contribute to the ATP site; that span reads LGRGQFGIT. The active-site Proton acceptor is D209. S249 is modified (phosphoserine). Residues 348–378 are autoinhibitory domain; the sequence is ISDKPINSAVLVRMKQFRAMNKLKKLALKVI. EF-hand domains are found at residues 385 to 420, 421 to 456, 457 to 492, and 493 to 527; these read EEIK…LGSK, LTES…RHRL, EKEE…YGMG, and DDAT…GTTD. 19 residues coordinate Ca(2+): D398, D400, S402, T404, E409, D434, D436, S438, T440, E445, D470, D472, S474, E481, D505, D507, D509, R511, and E516.

This sequence belongs to the protein kinase superfamily. Ser/Thr protein kinase family. CDPK subfamily.

It is found in the membrane. The catalysed reaction is L-seryl-[protein] + ATP = O-phospho-L-seryl-[protein] + ADP + H(+). It carries out the reaction L-threonyl-[protein] + ATP = O-phospho-L-threonyl-[protein] + ADP + H(+). Activated by calcium. Autophosphorylation may play an important role in the regulation of the kinase activity. May play a role in signal transduction pathways that involve calcium as a second messenger. This is Calcium-dependent protein kinase 29 (CPK29) from Arabidopsis thaliana (Mouse-ear cress).